A 113-amino-acid polypeptide reads, in one-letter code: Translation initiation factor IF-1, chloroplastic (113 aa).

The 76-residue stretch at 8 to 83 folds into the S1-like domain; that stretch reads REKKNPREAK…SKGRIIYRLP (76 aa). Residues 86–113 are disordered; the sequence is DSKRIEDSKDSEDLKDSEDLKDTKDSKD.

The protein belongs to the IF-1 family. In terms of assembly, component of the 30S ribosomal translation pre-initiation complex which assembles on the 30S ribosome in the order IF-2 and IF-3, IF-1 and N-formylmethionyl-tRNA(fMet); mRNA recruitment can occur at any time during PIC assembly.

Its subcellular location is the plastid. It is found in the chloroplast. Functionally, one of the essential components for the initiation of protein synthesis. Stabilizes the binding of IF-2 and IF-3 on the 30S subunit to which N-formylmethionyl-tRNA(fMet) subsequently binds. Helps modulate mRNA selection, yielding the 30S pre-initiation complex (PIC). Upon addition of the 50S ribosomal subunit IF-1, IF-2 and IF-3 are released leaving the mature 70S translation initiation complex. This chain is Translation initiation factor IF-1, chloroplastic, found in Hordeum vulgare (Barley).